The primary structure comprises 508 residues: Kinesin light chain 3 (508 aa).

The tract at residues 1–20 (MSVQVAAPGSTGLGPERLNP) is disordered. Residues 88–150 (LLALSAHVSV…EEEKSHLQFL (63 aa)) are a coiled coil. Positions 154–197 (RQYDPPEESQRPESPPRRDSLASLFPSEEEEKKGPEAAGAAAAQ) are disordered. Residues 161 to 173 (ESQRPESPPRRDS) show a composition bias toward basic and acidic residues. Phosphoserine is present on S173. TPR repeat units follow at residues 207–240 (LRTL…LERS), 249–282 (ATML…REQT), 291–324 (AATL…REKV), 333–366 (AKQL…YEAL), and 375–408 (AKTK…EALP). The tract at residues 409–441 (APLGAPQGGTAGDTQQQVLRRSSSFSKLRESIR) is disordered. Positions 420 to 434 (GDTQQQVLRRSSSFS) are enriched in polar residues. At S467 the chain carries Phosphoserine. A disordered region spans residues 486-508 (LSTRHLSEAPRTLSISTQDLSPR). Positions 498–508 (LSISTQDLSPR) are enriched in polar residues. At T502 the chain carries Phosphothreonine. S506 bears the Phosphoserine mark.

This sequence belongs to the kinesin light chain family. In terms of assembly, oligomer composed of two heavy chains and two light chains. Associates with microtubulin in an ATP-dependent manner. Interacts with KIF5C. Interacts with ODF1. Interacts with LRGUK. Interacts with VDAC2. As to expression, expressed in postmeiotic male germ cells (at protein level). Expressed in the testes (at protein level). Expressed in spleen, intestine, brain and ovary.

The protein localises to the cytoplasm. The protein resides in the cytoskeleton. It localises to the mitochondrion. In terms of biological role, kinesin is a microtubule-associated force-producing protein that may play a role in organelle transport. Plays a role during spermiogenesis in the development of the sperm tail midpiece and in the normal function of spermatozoa. May play a role in the formation of the mitochondrial sheath formation in the developing spermatid midpiece. The sequence is that of Kinesin light chain 3 (Klc3) from Mus musculus (Mouse).